The chain runs to 2506 residues: Highly reducing polyketide synthase rstn3 (2506 aa).

Positions 8–436 (VEPIAIVGMA…GANAHAILDA (429 aa)) constitute a Ketosynthase family 3 (KS3) domain. Active-site for beta-ketoacyl synthase activity residues include C183, H318, and H358. A Malonyl-CoA:ACP transacylase (MAT) domain is found at 547 to 875 (FIFTGQGAQW…KMVGSLFLSG (329 aa)). An N-terminal hotdog fold region spans residues 941-1050 (HDLLGSRLPG…ASDQSISSVE (110 aa)). The 272-residue stretch at 941 to 1212 (HDLLGSRLPG…FSSLETAVGE (272 aa)) folds into the PKS/mFAS DH domain. The active-site Proton acceptor; for dehydratase activity is H973. The segment at 1060–1212 (NKDSYDRRWY…FSSLETAVGE (153 aa)) is C-terminal hotdog fold. The active-site Proton donor; for dehydratase activity is the D1125. The methyltransferase (CMet) domain stretch occupies residues 1263–1563 (VTRLAIRSSA…SGADIVLDDY (301 aa)). The region spanning 1827–2093 (GRVDSFYFKE…QDDYVGRVVL (267 aa)) is the Enoyl reductase (ER) domain. Positions 2116-2296 (ASYLLIGCLG…QATSIALGMI (181 aa)) constitute a Ketoreductase (KR) domain. Positions 2423 to 2501 (AVKVTTLGLI…DLAEKVVALA (79 aa)) constitute a Carrier domain. The residue at position 2460 (S2460) is an O-(pantetheine 4'-phosphoryl)serine.

Pantetheine 4'-phosphate serves as cofactor.

It participates in antifungal biosynthesis. Highly reducing polyketide synthase; part of the gene cluster that mediates the biosynthesis of the tetrahydropyranyl antifungal agent restricticin that acts as an inhibitor of CYP51 and blocks the ergosterol biosynthesis. The highly reducing polyketide synthase rstn3, the short chain dehydrogenase rstn4, the cyclase rstn5, the FAD-dependent monooxygenase rstn6 and the enoylreductase rstn7 are required to generate the first stable intermediate desmethylrestrictinol. Rstn3 with rstn7 biosynthesize the first polyketide chain intermediate that is reduced by rstn4, followed by epoxidation by rstn6 before 6-endo cyclization via epoxide opening by rstn5 leads to desmethylrestrictinol. The methyltransferase rstn1 then catalyzes the C4 O-methylation of desmethylrestrictinol to produce restrictinol, and the nonribosomal peptide synthetase rstn8 catalyzes the C3 esterification of restrictinol with glycine that leads to restricticin. This Aspergillus nomiae NRRL (strain ATCC 15546 / NRRL 13137 / CBS 260.88 / M93) protein is Highly reducing polyketide synthase rstn3.